A 150-amino-acid chain; its full sequence is Ribonuclease pancreatic delta-type (150 aa).

A signal peptide spans 1–25 (MGLEKSFILFSLLVLVLGWVQPSLG). Position 35 (R35) interacts with substrate. The active-site Proton acceptor is the H37. 4 cysteine pairs are disulfide-bonded: C51–C110, C65–C121, C83–C136, and C90–C98. Substrate is bound by residues 66-70 (KPVNT) and K91. The active-site Proton donor is the H145.

Belongs to the pancreatic ribonuclease family. In terms of assembly, monomer.

It localises to the secreted. It catalyses the reaction an [RNA] containing cytidine + H2O = an [RNA]-3'-cytidine-3'-phosphate + a 5'-hydroxy-ribonucleotide-3'-[RNA].. It carries out the reaction an [RNA] containing uridine + H2O = an [RNA]-3'-uridine-3'-phosphate + a 5'-hydroxy-ribonucleotide-3'-[RNA].. Endonuclease that catalyzes the cleavage of RNA on the 3' side of pyrimidine nucleotides. Acts on single-stranded and double-stranded RNA. This Rattus tiomanicus (Malayan field rat) protein is Ribonuclease pancreatic delta-type.